A 367-amino-acid polypeptide reads, in one-letter code: UDP-N-acetylglucosamine--N-acetylmuramyl-(pentapeptide) pyrophosphoryl-undecaprenol N-acetylglucosamine transferase (367 aa).

UDP-N-acetyl-alpha-D-glucosamine is bound by residues 21–23 (TGG), Asn129, Arg170, Ser198, and Gln295.

Belongs to the glycosyltransferase 28 family. MurG subfamily.

The protein resides in the cell inner membrane. The catalysed reaction is di-trans,octa-cis-undecaprenyl diphospho-N-acetyl-alpha-D-muramoyl-L-alanyl-D-glutamyl-meso-2,6-diaminopimeloyl-D-alanyl-D-alanine + UDP-N-acetyl-alpha-D-glucosamine = di-trans,octa-cis-undecaprenyl diphospho-[N-acetyl-alpha-D-glucosaminyl-(1-&gt;4)]-N-acetyl-alpha-D-muramoyl-L-alanyl-D-glutamyl-meso-2,6-diaminopimeloyl-D-alanyl-D-alanine + UDP + H(+). It functions in the pathway cell wall biogenesis; peptidoglycan biosynthesis. Functionally, cell wall formation. Catalyzes the transfer of a GlcNAc subunit on undecaprenyl-pyrophosphoryl-MurNAc-pentapeptide (lipid intermediate I) to form undecaprenyl-pyrophosphoryl-MurNAc-(pentapeptide)GlcNAc (lipid intermediate II). In Synechococcus sp. (strain JA-2-3B'a(2-13)) (Cyanobacteria bacterium Yellowstone B-Prime), this protein is UDP-N-acetylglucosamine--N-acetylmuramyl-(pentapeptide) pyrophosphoryl-undecaprenol N-acetylglucosamine transferase.